The chain runs to 514 residues: Type-2 serine--tRNA ligase (514 aa).

Position 313 (Ala-313) interacts with L-serine. Cys-315 is a binding site for Zn(2+). An L-serine-binding site is contributed by Arg-344. ATP is bound by residues 344 to 346 (RWE) and 355 to 356 (RV). Position 361-363 (361-363 (RGE)) interacts with L-serine. Residues Glu-363 and Cys-470 each contribute to the Zn(2+) site. Arg-477 contributes to the ATP binding site.

This sequence belongs to the class-II aminoacyl-tRNA synthetase family. Type-2 seryl-tRNA synthetase subfamily. As to quaternary structure, homodimer. Zn(2+) serves as cofactor.

It localises to the cytoplasm. It catalyses the reaction tRNA(Ser) + L-serine + ATP = L-seryl-tRNA(Ser) + AMP + diphosphate + H(+). The enzyme catalyses tRNA(Sec) + L-serine + ATP = L-seryl-tRNA(Sec) + AMP + diphosphate + H(+). The protein operates within aminoacyl-tRNA biosynthesis; selenocysteinyl-tRNA(Sec) biosynthesis; L-seryl-tRNA(Sec) from L-serine and tRNA(Sec): step 1/1. In terms of biological role, catalyzes the attachment of serine to tRNA(Ser). Is also able to aminoacylate tRNA(Sec) with serine, to form the misacylated tRNA L-seryl-tRNA(Sec), which will be further converted into selenocysteinyl-tRNA(Sec). The polypeptide is Type-2 serine--tRNA ligase (Methanococcus maripaludis (strain C6 / ATCC BAA-1332)).